Reading from the N-terminus, the 203-residue chain is MTNDLIAKAAIDRRLAEIITPVIEDLGYELVRIRLMSGKTTTLQIMADRPDGGIEVDDCAAISNAVSATLDVEDPILDAYTLEVSSPGIDRPLTRLKDFDMFEGYEAKLETADLIDGRRRFKGELAGIEDDEVLINIEEHGETVTIGLKFDWLSDAKLVLTDDLIKEMLRQRKAAGVLNEDAFDDIETEGSAEGTTGSEEENK.

The tract at residues 183 to 203 is disordered; sequence FDDIETEGSAEGTTGSEEENK.

The protein belongs to the RimP family.

It localises to the cytoplasm. In terms of biological role, required for maturation of 30S ribosomal subunits. The polypeptide is Ribosome maturation factor RimP (Ruegeria sp. (strain TM1040) (Silicibacter sp.)).